Here is a 96-residue protein sequence, read N- to C-terminus: Citrate lyase acyl carrier protein (96 aa).

Ser-14 bears the O-(phosphoribosyl dephospho-coenzyme A)serine mark.

This sequence belongs to the CitD family. In terms of assembly, oligomer with a subunit composition of (alpha,beta,gamma)6.

Its subcellular location is the cytoplasm. Covalent carrier of the coenzyme of citrate lyase. This Lactiplantibacillus plantarum (strain ATCC BAA-793 / NCIMB 8826 / WCFS1) (Lactobacillus plantarum) protein is Citrate lyase acyl carrier protein.